The sequence spans 258 residues: UPF0246 protein YaaA (258 aa).

The protein belongs to the UPF0246 family.

The chain is UPF0246 protein YaaA from Shigella sonnei (strain Ss046).